The chain runs to 314 residues: Methionyl-tRNA formyltransferase (314 aa).

Residue 113-116 (SLLP) coordinates (6S)-5,6,7,8-tetrahydrofolate.

The protein belongs to the Fmt family.

The catalysed reaction is L-methionyl-tRNA(fMet) + (6R)-10-formyltetrahydrofolate = N-formyl-L-methionyl-tRNA(fMet) + (6S)-5,6,7,8-tetrahydrofolate + H(+). Attaches a formyl group to the free amino group of methionyl-tRNA(fMet). The formyl group appears to play a dual role in the initiator identity of N-formylmethionyl-tRNA by promoting its recognition by IF2 and preventing the misappropriation of this tRNA by the elongation apparatus. The protein is Methionyl-tRNA formyltransferase of Pseudomonas aeruginosa (strain UCBPP-PA14).